Here is a 110-residue protein sequence, read N- to C-terminus: UPF0122 protein GK1195 (110 aa).

The protein belongs to the UPF0122 family.

Might take part in the signal recognition particle (SRP) pathway. This is inferred from the conservation of its genetic proximity to ftsY/ffh. May be a regulatory protein. The polypeptide is UPF0122 protein GK1195 (Geobacillus kaustophilus (strain HTA426)).